The chain runs to 354 residues: Protein-arginine kinase (354 aa).

Residues 24-254 enclose the Phosphagen kinase C-terminal domain; the sequence is IVLSSRIRLA…QQIIQQEKLA (231 aa). ATP is bound by residues 27–31, His92, Arg125, 176–180, and 207–212; these read SSRIR, RASVM, and RGIYGE. The short motif at 337–342 is the RDXXRA motif of the pArg binding pocket involved in allosteric regulation element; it reads RDYRRA.

Belongs to the ATP:guanido phosphotransferase family.

The catalysed reaction is L-arginyl-[protein] + ATP = N(omega)-phospho-L-arginyl-[protein] + ADP + H(+). Appears to be allosterically activated by the binding of pArg-containing polypeptides to the pArg-binding pocket localized in the C-terminal domain of McsB. Functionally, catalyzes the specific phosphorylation of arginine residues in a large number of proteins. Is part of the bacterial stress response system. Protein arginine phosphorylation has a physiologically important role and is involved in the regulation of many critical cellular processes, such as protein homeostasis, motility, competence, and stringent and stress responses, by regulating gene expression and protein activity. This Bacillus cereus (strain B4264) protein is Protein-arginine kinase.